Reading from the N-terminus, the 97-residue chain is Cobalt transport protein CbiN (97 aa).

2 consecutive transmembrane segments (helical) span residues 6-26 (VLMILGVIILTLAPLIMYSGL) and 68-88 (SLLFALQAAIGAMIIGYFFGY).

It belongs to the CbiN family. In terms of assembly, forms an energy-coupling factor (ECF) transporter complex composed of an ATP-binding protein (A component, CbiO), a transmembrane protein (T component, CbiQ) and 2 possible substrate-capture proteins (S components, CbiM and CbiN) of unknown stoichimetry.

Its subcellular location is the cell membrane. The protein operates within cofactor biosynthesis; adenosylcobalamin biosynthesis. Part of the energy-coupling factor (ECF) transporter complex CbiMNOQ involved in cobalt import. This is Cobalt transport protein CbiN from Methanococcus maripaludis (strain C6 / ATCC BAA-1332).